Consider the following 303-residue polypeptide: MISIFSKLKQGLSKTSGKISAGIDKIFYKKKLDAETLEELEELLISTDMGSLVAAKIIEDFKSLKFDKEVETTEIKETLANLIEQQLLESEIPFTLNENKLNVVLVCGVNGAGKTTTIGKLAAMYGMQGKKVAVAACDTFRAAAVNQLDSWVTRAKALLITGEEAADPASVAYRAVEESIKQDIDILFIDTAGRLHNKKNLMDELTKIVKVIKKVDENLPTHSVLVIDAITGQNTYNQVEHFNDATNLTGLIVTKLDGSAKAGVIVGVVQRFNLPIYFIGIGEQIEDLKIFNRHDFAKSLVGL.

GTP is bound by residues 108–115, 190–194, and 254–257; these read GVNGAGKT, DTAGR, and TKLD.

The protein belongs to the GTP-binding SRP family. FtsY subfamily. As to quaternary structure, part of the signal recognition particle protein translocation system, which is composed of SRP and FtsY. SRP is a ribonucleoprotein composed of Ffh and a 4.5S RNA molecule.

The protein resides in the cell inner membrane. Its subcellular location is the cytoplasm. The enzyme catalyses GTP + H2O = GDP + phosphate + H(+). Involved in targeting and insertion of nascent membrane proteins into the cytoplasmic membrane. Acts as a receptor for the complex formed by the signal recognition particle (SRP) and the ribosome-nascent chain (RNC). Interaction with SRP-RNC leads to the transfer of the RNC complex to the Sec translocase for insertion into the membrane, the hydrolysis of GTP by both Ffh and FtsY, and the dissociation of the SRP-FtsY complex into the individual components. In Rickettsia bellii (strain RML369-C), this protein is Signal recognition particle receptor FtsY.